We begin with the raw amino-acid sequence, 975 residues long: Chromosome transmission fidelity protein 18 homolog (975 aa).

2 disordered regions span residues 30–83 and 114–141; these read EGAS…KRQV and SEEMEEPPPPDSSPTDITPPPSPEDLAE. Thr51 bears the Phosphothreonine mark. Over residues 58-77 the composition is skewed to low complexity; sequence RGDAASSPAPAASVGSSQGG. Phosphoserine is present on Ser64. Residues 122–136 show a composition bias toward pro residues; that stretch reads PPDSSPTDITPPPSP. Ser225 is subject to Phosphoserine. Disordered stretches follow at residues 246–276 and 320–346; these read SDTLHSLRSGEEEAAQPLGAPEEEPTDGQDA and RPSRKPRPSVEPARVSKEATAPGKWKS. Residue 374–381 participates in ATP binding; sequence GPPGLGKT. Residues 858 to 896 form a disordered region; the sequence is ASARVENSPQVDGSPPGLEGLLGGIGEKGVHRPAPRNHE. Ser871 bears the Phosphoserine mark.

The protein belongs to the activator 1 small subunits family. CTF18 subfamily. In terms of assembly, component of the CTF18-RFC complex, which consists of CTF18, CTF8, DCC1, RFC2, RFC3, RFC4 and RFC5. During assembly of the CTF18-RFC complex, CTF18 may first assemble into a subcomplex with RFC2, RFC3, RFC4 and RFC5. CTF18 then interacts directly with CTF8, which in turn interacts with DCC1. The CTF18-RFC complex associates with PCNA and with DNA polymerase POLH. The CTF18-RFC complex does not interact with the Rad9/Rad1/Hus1 complex. CTF18 interacts with SMC1A and RAD21. Interacts with DDX11.

The protein localises to the nucleus. Functionally, chromosome cohesion factor involved in sister chromatid cohesion and fidelity of chromosome transmission. Component of one of the cell nuclear antigen loader complexes, CTF18-replication factor C (CTF18-RFC), which consists of CTF18, CTF8, DCC1, RFC2, RFC3, RFC4 and RFC5. The CTF18-RFC complex binds to single-stranded and primed DNAs and has weak ATPase activity that is stimulated by the presence of primed DNA, replication protein A (RPA) and by proliferating cell nuclear antigen (PCNA). The CTF18-RFC complex catalyzes the ATP-dependent loading of PCNA onto primed and gapped DNA. Interacts with and stimulates DNA polymerase POLH. During DNA repair synthesis, involved in loading DNA polymerase POLE at the sites of local damage. The chain is Chromosome transmission fidelity protein 18 homolog (CHTF18) from Homo sapiens (Human).